Reading from the N-terminus, the 360-residue chain is GTPase Obg (360 aa).

The Obg domain maps to 1–156; sequence MFVDSVEIII…KCVRLELKLI (156 aa). The region spanning 157 to 360 is the OBG-type G domain; it reads ADIGLVGFPN…LKFVLLEALP (204 aa). GTP-binding positions include 163–170, 188–192, 210–213, 279–282, and 341–343; these read GFPNAGKS, FTTLV, DIPG, NKCD, and SAV. Residues serine 170 and threonine 190 each coordinate Mg(2+).

Belongs to the TRAFAC class OBG-HflX-like GTPase superfamily. OBG GTPase family. Monomer. The cofactor is Mg(2+).

The protein resides in the cytoplasm. An essential GTPase which binds GTP, GDP and possibly (p)ppGpp with moderate affinity, with high nucleotide exchange rates and a fairly low GTP hydrolysis rate. Plays a role in control of the cell cycle, stress response, ribosome biogenesis and in those bacteria that undergo differentiation, in morphogenesis control. This is GTPase Obg from Helicobacter acinonychis (strain Sheeba).